We begin with the raw amino-acid sequence, 434 residues long: Serine--tRNA ligase (434 aa).

Position 239–241 (239–241 (TAE)) interacts with L-serine. 270-272 (RSE) lines the ATP pocket. E293 contacts L-serine. An ATP-binding site is contributed by 357–360 (EISS). An L-serine-binding site is contributed by S393.

This sequence belongs to the class-II aminoacyl-tRNA synthetase family. Type-1 seryl-tRNA synthetase subfamily. As to quaternary structure, homodimer. The tRNA molecule binds across the dimer.

It localises to the cytoplasm. The catalysed reaction is tRNA(Ser) + L-serine + ATP = L-seryl-tRNA(Ser) + AMP + diphosphate + H(+). It carries out the reaction tRNA(Sec) + L-serine + ATP = L-seryl-tRNA(Sec) + AMP + diphosphate + H(+). The protein operates within aminoacyl-tRNA biosynthesis; selenocysteinyl-tRNA(Sec) biosynthesis; L-seryl-tRNA(Sec) from L-serine and tRNA(Sec): step 1/1. Functionally, catalyzes the attachment of serine to tRNA(Ser). Is also able to aminoacylate tRNA(Sec) with serine, to form the misacylated tRNA L-seryl-tRNA(Sec), which will be further converted into selenocysteinyl-tRNA(Sec). The sequence is that of Serine--tRNA ligase from Pseudoalteromonas translucida (strain TAC 125).